A 430-amino-acid chain; its full sequence is MEF2-activating motif and SAP domain-containing transcriptional regulator (430 aa).

The short motif at 12-28 (IIRSKFRSVLQLRIHRR) is the MEF2-binding element. Disordered stretches follow at residues 84 to 172 (CWSL…PLPH), 204 to 239 (KSML…RFRP), 280 to 301 (VATT…APAS), and 330 to 416 (EDQV…DLSD). The segment covering 87–103 (LKKESPKTSQHWREPKP) has biased composition (basic and acidic residues). Pro residues predominate over residues 147–170 (QPPPRMKPTPLTPSPPGVPSPSPL). The 35-residue stretch at 181-215 (LEELTVSELRQQLRLRGLPVSGTKSMLLERMRGGA) folds into the SAP domain. Basic and acidic residues predominate over residues 207 to 228 (LLERMRGGAPPRERPKARREDS). Positions 224–430 (RREDSAAGAP…RLWDLLEDPW (207 aa)) are transcription activation. Composition is skewed to low complexity over residues 363–373 (SSVFSSSLPSP) and 393–403 (ALSGGPSLGCG).

Interacts with MEF2C.

It is found in the nucleus. In terms of biological role, transcriptional coactivator. Stimulates the transcriptional activity of MEF2C. Stimulates MYOD1 activity in part via MEF2, resulting in an enhancement of skeletal muscle differentiation. The protein is MEF2-activating motif and SAP domain-containing transcriptional regulator (MAMSTR) of Bos taurus (Bovine).